The following is a 144-amino-acid chain: NADH dehydrogenase [ubiquinone] 1 alpha subcomplex subunit 13 (144 aa).

Ala-2 carries the N-acetylalanine modification. A helical transmembrane segment spans residues 30–51; sequence LSGYSMFAVGIGALIFGYWRMM.

This sequence belongs to the complex I NDUFA13 subunit family. As to quaternary structure, complex I is composed of 45 different subunits. Interacts with CARD15, but not with CARD4. Interacts with STAT3, but not with STAT1, STAT2 and STAT5A. Interacts with OLFM4.

It is found in the mitochondrion inner membrane. The protein localises to the nucleus. Functionally, accessory subunit of the mitochondrial membrane respiratory chain NADH dehydrogenase (Complex I), that is believed not to be involved in catalysis. Complex I functions in the transfer of electrons from NADH to the respiratory chain. The immediate electron acceptor for the enzyme is believed to be ubiquinone. Involved in the interferon/all-trans-retinoic acid (IFN/RA) induced cell death. This apoptotic activity is inhibited by interaction with viral IRF1. Prevents the transactivation of STAT3 target genes. May play a role in CARD15-mediated innate mucosal responses and serve to regulate intestinal epithelial cell responses to microbes. This is NADH dehydrogenase [ubiquinone] 1 alpha subcomplex subunit 13 (Ndufa13) from Mus musculus (Mouse).